We begin with the raw amino-acid sequence, 73 residues long: Copper chaperone ATX1 (73 aa).

One can recognise an HMA domain in the interval 4–68 (IKHYQFNVVM…KIKKTGKEVR (65 aa)). The Cu(+) site is built by cysteine 15 and cysteine 18.

The protein belongs to the ATX1 family. As to quaternary structure, homodimer. Interacts with CCC2 via the copper anion.

Its subcellular location is the cytoplasm. Its activity is regulated as follows. Tetrathiomolybdate directly and reversibly down-regulates copper delivery to secreted metalloenzymes. In terms of biological role, copper homeostasis factor that specifically transports copper to the secretory pathway for incorporation into copper enzymes destined for the cell surface or extracellular milieu. Shuttles copper to the transport ATPase CCC2 on a post-Golgi vesicle for eventual targeting to the cell-surface high-affinity iron uptake protein FET3. Protects against oxygen toxicity. This is Copper chaperone ATX1 from Saccharomyces cerevisiae (strain ATCC 204508 / S288c) (Baker's yeast).